Consider the following 86-residue polypeptide: MATVFERVKKVSVEQLGAEEKDVVPAASFADDLGADSLDQVELIMALETEFGTPDAKFEIPDTDAEKLKTVQAVVDYLKSKGIKDS.

Positions 2 to 82 constitute a Carrier domain; the sequence is ATVFERVKKV…AVVDYLKSKG (81 aa). Ser-37 is modified (O-(pantetheine 4'-phosphoryl)serine).

Belongs to the acyl carrier protein (ACP) family. Post-translationally, 4'-phosphopantetheine is transferred from CoA to a specific serine of apo-ACP by AcpS. This modification is essential for activity because fatty acids are bound in thioester linkage to the sulfhydryl of the prosthetic group.

It is found in the cytoplasm. It participates in lipid metabolism; fatty acid biosynthesis. Carrier of the growing fatty acid chain in fatty acid biosynthesis. In Dehalococcoides mccartyi (strain ATCC BAA-2266 / KCTC 15142 / 195) (Dehalococcoides ethenogenes (strain 195)), this protein is Acyl carrier protein.